The following is a 179-amino-acid chain: Natural killer cells antigen CD94 (179 aa).

The Cytoplasmic portion of the chain corresponds to 1 to 10; that stretch reads MAVFKTTLWR. A helical; Signal-anchor for type II membrane protein transmembrane segment spans residues 11-31; sequence LISGTLGIICLSLMATLGILL. Topologically, residues 32–179 are extracellular; sequence KNSFTKLSVE…NRYICKQQLI (148 aa). 2 cysteine pairs are disulfide-bonded: C58-C70 and C61-C72. In terms of domain architecture, C-type lectin spans 68–175; sequence YRCNCYFISS…CETKNRYICK (108 aa). N-linked (GlcNAc...) asparagine glycans are attached at residues N83 and N132. 2 disulfides stabilise this stretch: C89-C174 and C152-C166.

Can form disulfide-bonded heterodimer with NKG2 family members KLRC1 and KLRC2. KLRD1-KLRC1 heterodimer interacts with peptide-bound MHC-E-B2M heterotrimeric complex. KLRD1 plays a prominent role in directly interacting with MHC-E. KLRD1-KLRC1 interacts with much higher affinity with peptide-bound MHC-E-B2M than KLRD1-KLRC2. Interacts with the adapter protein TYROBP/DAP12; this interaction is required for cell surface expression and cell activation. As to expression, natural killer cells.

It localises to the cell membrane. Its function is as follows. Immune receptor involved in self-nonself discrimination. In complex with KLRC1 or KLRC2 on cytotoxic and regulatory lymphocyte subsets, recognizes non-classical major histocompatibility (MHC) class Ib molecule MHC-E loaded with self-peptides derived from the signal sequence of classical MHC class Ia and non-classical MHC class Ib molecules. Enables cytotoxic cells to monitor the expression of MHC class I molecules in healthy cells and to tolerate self. Primarily functions as a ligand binding subunit as it lacks the capacity to signal. KLRD1-KLRC1 acts as an immune inhibitory receptor. Key inhibitory receptor on natural killer (NK) cells that regulates their activation and effector functions. Dominantly counteracts T cell receptor signaling on a subset of memory/effector CD8-positive T cells as part of an antigen-driven response to avoid autoimmunity. On intraepithelial CD8-positive gamma-delta regulatory T cells triggers TGFB1 secretion, which in turn limits the cytotoxic programming of intraepithelial CD8-positive alpha-beta T cells, distinguishing harmless from pathogenic antigens. In MHC-E-rich tumor microenvironment, acts as an immune inhibitory checkpoint and may contribute to progressive loss of effector functions of NK cells and tumor-specific T cells, a state known as cell exhaustion. Upon MHC-E-peptide binding, transmits intracellular signals through KLRC1 immunoreceptor tyrosine-based inhibition motifs (ITIMs) by recruiting INPP5D/SHIP-1 and INPPL1/SHIP-2 tyrosine phosphatases to ITIMs, and ultimately opposing signals transmitted by activating receptors through dephosphorylation of proximal signaling molecules. In terms of biological role, KLRD1-KLRC2 acts as an immune activating receptor. On cytotoxic lymphocyte subsets recognizes MHC-E loaded with signal sequence-derived peptides from non-classical MHC class Ib MHC-G molecules, likely playing a role in the generation and effector functions of adaptive NK cells and in maternal-fetal tolerance during pregnancy. Regulates the effector functions of terminally differentiated cytotoxic lymphocyte subsets, and in particular may play a role in adaptive NK cell response to viral infection. Upon MHC-E-peptide binding, transmits intracellular signals via the adapter protein TYROBP/DAP12, triggering the phosphorylation of proximal signaling molecules and cell activation. The chain is Natural killer cells antigen CD94 (KLRD1) from Macaca mulatta (Rhesus macaque).